A 500-amino-acid chain; its full sequence is Endothelial lipase (500 aa).

The N-terminal stretch at 1–20 (MSNSVPLLCFWSLCYCFAAG) is a signal peptide. The cysteines at positions 64 and 77 are disulfide-linked. N-linked (GlcNAc...) asparagine glycosylation is found at Asn-80 and Asn-136. The active-site Nucleophile is Ser-169. The active-site Charge relay system is Asp-193. Cys-252 and Cys-272 form a disulfide bridge. Catalysis depends on His-274, which acts as the Charge relay system. Intrachain disulfides connect Cys-297/Cys-316 and Cys-308/Cys-311. 325–337 (KMRNKRNSKMYLK) lines the heparin pocket. Residues 347-482 (YHYQMKIHVF…SPGRELWFRK (136 aa)) enclose the PLAT domain. Asn-393, Asn-469, and Asn-491 each carry an N-linked (GlcNAc...) asparagine glycan. The cysteines at positions 463 and 483 are disulfide-linked.

The protein belongs to the AB hydrolase superfamily. Lipase family. Head to tail homodimer. In terms of tissue distribution, high level of expression in the liver, placenta, lung, thyroid, kidney, testis and in the corpus luteum of the ovary. Expressed also in coronary artery endothelial cells, umbilical vein endothelial cells and in hepatocytes and osteosarcoma cell lines. Not detected in heart, brain and muscle.

It localises to the secreted. It catalyses the reaction a triacylglycerol + H2O = a diacylglycerol + a fatty acid + H(+). The enzyme catalyses a 1,2-diacyl-sn-glycero-3-phosphocholine + H2O = a 2-acyl-sn-glycero-3-phosphocholine + a fatty acid + H(+). The catalysed reaction is 1,2,3-tri-(9Z-octadecenoyl)-glycerol + H2O = di-(9Z)-octadecenoylglycerol + (9Z)-octadecenoate + H(+). It carries out the reaction 1,2,3-tributanoylglycerol + H2O = dibutanoylglycerol + butanoate + H(+). It catalyses the reaction 1,2-dihexadecanoyl-sn-glycero-3-phosphocholine + H2O = hexadecanoyl-sn-glycero-3-phosphocholine + hexadecanoate + H(+). Inhibited by serum and NaCl. Its function is as follows. Exerts both phospholipase and triglyceride lipase activities. More active as a phospholipase than a triglyceride lipase. Hydrolyzes triglycerides, both with short-chain fatty acyl groups (tributyrin) and long-chain fatty acyl groups (triolein) with similar levels of activity toward both types of substrates. Hydrolyzes high density lipoproteins (HDL) more efficiently than other lipoproteins. In Homo sapiens (Human), this protein is Endothelial lipase (LIPG).